We begin with the raw amino-acid sequence, 217 residues long: 3,4-dihydroxy-2-butanone 4-phosphate synthase (217 aa).

Residues 37–38 (RE), D42, 150–154 (RGGHT), and E174 contribute to the D-ribulose 5-phosphate site. E38 is a Mg(2+) binding site. H153 is a binding site for Mg(2+).

Belongs to the DHBP synthase family. Homodimer. The cofactor is Mg(2+). Requires Mn(2+) as cofactor.

The catalysed reaction is D-ribulose 5-phosphate = (2S)-2-hydroxy-3-oxobutyl phosphate + formate + H(+). The protein operates within cofactor biosynthesis; riboflavin biosynthesis; 2-hydroxy-3-oxobutyl phosphate from D-ribulose 5-phosphate: step 1/1. Its function is as follows. Catalyzes the conversion of D-ribulose 5-phosphate to formate and 3,4-dihydroxy-2-butanone 4-phosphate. The polypeptide is 3,4-dihydroxy-2-butanone 4-phosphate synthase (Klebsiella pneumoniae subsp. pneumoniae (strain ATCC 700721 / MGH 78578)).